A 468-amino-acid polypeptide reads, in one-letter code: Secreted triacylglycerol lipase LIP7 (468 aa).

Residues 1–21 (MFPRQILVFAALGLCFALVAG) form the signal peptide. An intrachain disulfide couples cysteine 125 to cysteine 295. Serine 209 acts as the Nucleophile in catalysis. Catalysis depends on residues aspartate 355 and histidine 389.

This sequence belongs to the AB hydrolase superfamily. Lipase family. Class Lip subfamily.

The protein resides in the secreted. It is found in the cell wall. It carries out the reaction a triacylglycerol + H2O = a diacylglycerol + a fatty acid + H(+). The enzyme catalyses a monoacylglycerol + H2O = glycerol + a fatty acid + H(+). The catalysed reaction is a diacylglycerol + H2O = a monoacylglycerol + a fatty acid + H(+). Functionally, secreted lipase involved in Dandruff and seborrheic dermatitis (D/SD) probably via lipase-mediated breakdown of sebaceous lipids and release of irritating free fatty acids. Has triacylglycerol lipase activity and is able to hydrolyze triolein. Mostly converts monoolein to di- and triolein, while free fatty acids are only produced in low amounts. In Malassezia globosa (strain ATCC MYA-4612 / CBS 7966) (Dandruff-associated fungus), this protein is Secreted triacylglycerol lipase LIP7.